A 262-amino-acid polypeptide reads, in one-letter code: Iso-A82775C biosynthesis cluster protein B (262 aa).

In terms of biological role, part of the gene cluster that mediates the biosynthesis of iso-A82775C, a enylepoxycyclohexane and biosynthetic precursor of the chloropestolide anticancer natural products. Within the cluster, the prenyltransferase iacE prenylates siccayne to generate pestalodiol E, using dimethylallyl diphosphate (DMAPP) as cosubstrate. The probable oxidoreductase iacF is then involved in the epoxidation of pestalodiol F to pestalodiol F, which is further converted to pestalofone A by the short-chain dehydrogenase/reductase iacG. Iso-A82775C is subsequently generated from pestalofone A by the short-chain dehydrogenase/reductase iacC. Iso-A82775C is further condensed with maldoxin via a Diels-Alder reaction to produce the anticancer natural products chloropestolides A to E. This Pestalotiopsis fici (strain W106-1 / CGMCC3.15140) protein is Iso-A82775C biosynthesis cluster protein B.